Reading from the N-terminus, the 880-residue chain is Beta-glucosidase 2 (880 aa).

The first 17 residues, 1–17, serve as a signal peptide directing secretion; sequence MLLILELLVLIIGLGVA. N-linked (GlcNAc...) asparagine glycosylation is found at asparagine 24, asparagine 77, and asparagine 271. Residue aspartate 299 is part of the active site. N-linked (GlcNAc...) asparagine glycans are attached at residues asparagine 336, asparagine 343, asparagine 376, asparagine 548, asparagine 589, asparagine 712, asparagine 743, and asparagine 794.

This sequence belongs to the glycosyl hydrolase 3 family.

It catalyses the reaction Hydrolysis of terminal, non-reducing beta-D-glucosyl residues with release of beta-D-glucose.. It functions in the pathway glycan metabolism; cellulose degradation. This chain is Beta-glucosidase 2 (BGL2), found in Saccharomycopsis fibuligera (Yeast).